A 250-amino-acid polypeptide reads, in one-letter code: Eukaryotic translation initiation factor 3 subunit K (250 aa).

Positions 46–229 (FDCYANLALL…KENEARSEVK (184 aa)) constitute a PCI domain.

The protein belongs to the eIF-3 subunit K family. Component of the eukaryotic translation initiation factor 3 (eIF-3) complex.

Its subcellular location is the cytoplasm. Functionally, component of the eukaryotic translation initiation factor 3 (eIF-3) complex, which is involved in protein synthesis of a specialized repertoire of mRNAs and, together with other initiation factors, stimulates binding of mRNA and methionyl-tRNAi to the 40S ribosome. The eIF-3 complex specifically targets and initiates translation of a subset of mRNAs involved in cell proliferation. The polypeptide is Eukaryotic translation initiation factor 3 subunit K (Emericella nidulans (strain FGSC A4 / ATCC 38163 / CBS 112.46 / NRRL 194 / M139) (Aspergillus nidulans)).